The following is a 446-amino-acid chain: Tubulin beta-6 chain (446 aa).

Positions 11, 69, 138, 142, 143, 144, 204, and 226 each coordinate GTP. E69 provides a ligand contact to Mg(2+). The segment at 426–446 (QDATADEEEYEDEEEVQADDM) is disordered. Residues 429 to 446 (TADEEEYEDEEEVQADDM) show a composition bias toward acidic residues.

Belongs to the tubulin family. As to quaternary structure, dimer of alpha and beta chains. A typical microtubule is a hollow water-filled tube with an outer diameter of 25 nm and an inner diameter of 15 nM. Alpha-beta heterodimers associate head-to-tail to form protofilaments running lengthwise along the microtubule wall with the beta-tubulin subunit facing the microtubule plus end conferring a structural polarity. Microtubules usually have 13 protofilaments but different protofilament numbers can be found in some organisms and specialized cells. The cofactor is Mg(2+).

The protein resides in the cytoplasm. The protein localises to the cytoskeleton. Functionally, tubulin is the major constituent of microtubules, a cylinder consisting of laterally associated linear protofilaments composed of alpha- and beta-tubulin heterodimers. Microtubules grow by the addition of GTP-tubulin dimers to the microtubule end, where a stabilizing cap forms. Below the cap, tubulin dimers are in GDP-bound state, owing to GTPase activity of alpha-tubulin. The polypeptide is Tubulin beta-6 chain (TUBB6) (Zea mays (Maize)).